A 398-amino-acid polypeptide reads, in one-letter code: S-adenosylmethionine synthase (398 aa).

His-17 provides a ligand contact to ATP. Residue Asp-19 coordinates Mg(2+). A K(+)-binding site is contributed by Glu-45. L-methionine-binding residues include Glu-58 and Gln-101. A flexible loop region spans residues Gln-101–Thr-111. Residues Asp-176–Lys-178, Arg-243–Phe-244, Asp-252, Arg-258–Lys-259, and Lys-279 contribute to the ATP site. Asp-252 is a binding site for L-methionine. An L-methionine-binding site is contributed by Lys-283.

This sequence belongs to the AdoMet synthase family. Homotetramer; dimer of dimers. Mg(2+) serves as cofactor. The cofactor is K(+).

The protein localises to the cytoplasm. The catalysed reaction is L-methionine + ATP + H2O = S-adenosyl-L-methionine + phosphate + diphosphate. The protein operates within amino-acid biosynthesis; S-adenosyl-L-methionine biosynthesis; S-adenosyl-L-methionine from L-methionine: step 1/1. Its function is as follows. Catalyzes the formation of S-adenosylmethionine (AdoMet) from methionine and ATP. The overall synthetic reaction is composed of two sequential steps, AdoMet formation and the subsequent tripolyphosphate hydrolysis which occurs prior to release of AdoMet from the enzyme. This is S-adenosylmethionine synthase from Staphylococcus saprophyticus subsp. saprophyticus (strain ATCC 15305 / DSM 20229 / NCIMB 8711 / NCTC 7292 / S-41).